A 664-amino-acid chain; its full sequence is Probable urea active transporter 1 (664 aa).

16 consecutive transmembrane segments (helical) span residues Ser-9–Val-29, Gly-56–Ala-76, Gly-86–Ile-106, Gly-132–Gly-152, Thr-165–Ile-185, Phe-189–Ala-209, Gly-252–Gly-272, Ile-290–Val-310, Met-327–Gly-347, Ala-353–Val-373, Leu-395–Thr-415, Tyr-428–Phe-448, Ile-454–Val-474, Ala-496–Phe-516, Val-555–Thr-575, and Trp-587–Leu-607.

Belongs to the sodium:solute symporter (SSF) (TC 2.A.21) family.

The protein localises to the membrane. In terms of biological role, involved in active transport of urea. The sequence is that of Probable urea active transporter 1 (dur3-1) from Schizosaccharomyces pombe (strain 972 / ATCC 24843) (Fission yeast).